The primary structure comprises 490 residues: MDLTFASLSEISEAVNNRSISAKEVTLHFLKRIENLNPKLNAFTSLNPQAVQEAEAVDARIANGEDVGLLAGVPFGIKEMFCTKGLTTTAGSKILENFVPPYDATAVARLKKSGIVVMGKLNQDEFAMGSSNETSFHGVVKNPWDLERVPGGSSGGSAAAQASRLVAGTLGTDTGGSIRQPASFCGIVGVKPTYGRVSRYGIVAYASSLDQAGPMVSSVRDAALTLEVISGFDPQDSTTTQKQVPAWSQNLKADVKGMKIGLMKEYMTGALDPDVQKTVENSVDTLKQLGAEIVEVSVPMTAFAVPVYYLVAASEASSNLSRYDGVKYGYRAEFKNLSAVDLEEFYSQTRGQAFGAEVKRRIMLGTYCLSSGYYDAFYNKAGQVRRLIMEQYLEAFKKCDVILSPVTTAPAFKIGERVSDPLAMYLNDIFTTSTNLAGLPGMSVPFGQSQSGLPIGIQLTAGHFEEQKMLNVAFALEGASLVKGKHPHVI.

Active-site charge relay system residues include Lys-78 and Ser-153. Residue Ser-177 is the Acyl-ester intermediate of the active site.

Belongs to the amidase family. GatA subfamily. Heterotrimer of A, B and C subunits.

The enzyme catalyses L-glutamyl-tRNA(Gln) + L-glutamine + ATP + H2O = L-glutaminyl-tRNA(Gln) + L-glutamate + ADP + phosphate + H(+). Allows the formation of correctly charged Gln-tRNA(Gln) through the transamidation of misacylated Glu-tRNA(Gln) in organisms which lack glutaminyl-tRNA synthetase. The reaction takes place in the presence of glutamine and ATP through an activated gamma-phospho-Glu-tRNA(Gln). The polypeptide is Glutamyl-tRNA(Gln) amidotransferase subunit A (Bdellovibrio bacteriovorus (strain ATCC 15356 / DSM 50701 / NCIMB 9529 / HD100)).